The sequence spans 649 residues: Lipoteichoic acid synthase 2 (649 aa).

Topologically, residues 1-9 (MKTFIKERG) are cytoplasmic. Residues 10-30 (LAFFLIAVVLLWIKTYVGYVL) traverse the membrane as a helical segment. The Extracellular portion of the chain corresponds to 31–42 (NFNLGIDNTIQK). A helical membrane pass occupies residues 43–63 (ILLFVNPLSSSLFFLGFGLLF). Residues 64–69 (KKKLQQ) lie on the Cytoplasmic side of the membrane. Residues 70-90 (TAIIVIHFLMSFLLYANIVYY) form a helical membrane-spanning segment. Topologically, residues 91–118 (RFFNDFITIPVIMQAKTNGGQLGDSAFS) are extracellular. Residues 119–139 (LMRPTDAFYFIDTIILIILAI) form a helical membrane-spanning segment. Topologically, residues 140-151 (KVNKPAETSSKK) are cytoplasmic. The chain crosses the membrane as a helical span at residues 152 to 172 (SFRIIFASSILVFLINLAVAE). Over 173–649 (SDRPELLTRS…SETSKDNEDK (477 aa)) the chain is Extracellular. The Mn(2+) site is built by glutamate 253 and threonine 297. Threonine 297 is a catalytic residue. Histidine 412 lines the substrate pocket. Mn(2+) contacts are provided by aspartate 471 and histidine 472. Residues 622–649 (FKKVNPSDYDYTKHDEDSSETSKDNEDK) form a disordered region. A compositionally biased stretch (basic and acidic residues) spans 631–649 (DYTKHDEDSSETSKDNEDK).

It belongs to the LTA synthase family. Proteolytically cleaved.

It is found in the cell membrane. It localises to the secreted. It functions in the pathway cell wall biogenesis; lipoteichoic acid biosynthesis. Its function is as follows. Catalyzes the polymerization of lipoteichoic acid (LTA) polyglycerol phosphate, a reaction that presumably uses phosphatidylglycerol (PG) as substrate. This Bacillus subtilis (strain 168) protein is Lipoteichoic acid synthase 2 (ltaS2).